Here is a 548-residue protein sequence, read N- to C-terminus: MGFEELLEQVGGFGPFQLRNVALLALPRVLLPLHFLLPIFLAAVPAHRCALPGAPANFSHQDVWLEAHLPREPDGTLSSCLRFAYPQALPNTTLGEERQSRGELEDEPATVPCSQGWEYDRSEFSSTIATESQWDLVCEQKGLNRAASTFFFAGVLVGAVAFGYLSDRFGRRRLLLVAYVSTLVLGLASAASVSYVMFAITRTLTGSALAGFTIIVMPLELEWLDVEHRTVAGVLSSTFWTGGMMLLALVGYLIRDWRWLLLAVTLPCAPGILSLWWVPESARWLLTQGHVKEAHRYLLHCARLNGRPVCEDSLSQEAVSKVAAGERVVRRPSYLDLFRTPRLRHISLCCVVVWFGVNFSYYGLSLDVSGLGLNVYQTQLLFGAVELPSKLLVYLSVRYAGRRLTQAGTLLGTALAFGTRLLVSSDMKSWSTVLAVMGKAFSEAAFTTAYLFTSELYPTVLRQTGMGLTALVGRLGGSLAPLAALLDGVWLSLPKLTYGGIALLAAGTALLLPETRQAQLPETIQDVERKSAPTSLQEEEMPMKQVQN.

Helical transmembrane passes span 21–41 (VALL…PIFL), 146–166 (AAST…GYLS), 180–200 (VSTL…MFAI), 204–224 (LTGS…LEWL), 234–254 (VLSS…GYLI), 259–279 (WLLL…WWVP), 346–366 (ISLC…GLSL), 376–397 (YQTQ…YLSV), 404–423 (LTQA…RLLV), 432–452 (TVLA…AYLF), 466–486 (MGLT…AALL), and 493–513 (LPKL…LLLP). A disordered region spans residues 522–548 (ETIQDVERKSAPTSLQEEEMPMKQVQN).

This sequence belongs to the major facilitator (TC 2.A.1) superfamily. Organic cation transporter (TC 2.A.1.19) family.

It is found in the basolateral cell membrane. The protein resides in the apical cell membrane. Its subcellular location is the cell membrane. The catalysed reaction is orotate(out) + L-glutamate(in) = orotate(in) + L-glutamate(out). It carries out the reaction 3',5'-cyclic GMP(in) = 3',5'-cyclic GMP(out). The enzyme catalyses GMP(in) = GMP(out). It catalyses the reaction 2'-deoxyguanosine(in) = 2'-deoxyguanosine(out). The catalysed reaction is GDP(in) = GDP(out). It carries out the reaction guanosine(in) = guanosine(out). The enzyme catalyses GTP(in) = GTP(out). It catalyses the reaction 3',5'-cyclic AMP(in) = 3',5'-cyclic AMP(out). The catalysed reaction is creatinine(in) = creatinine(out). It carries out the reaction prostaglandin E2(out) = prostaglandin E2(in). The enzyme catalyses 2-oxoglutarate(in) = 2-oxoglutarate(out). It catalyses the reaction glutarate(in) = glutarate(out). The catalysed reaction is urate(out) = urate(in). It carries out the reaction estrone 3-sulfate(out) = estrone 3-sulfate(in). Functions as a Na(+)-independent bidirectional multispecific transporter. Contributes to the renal and hepatic elimination of endogenous organic compounds from the systemic circulation into the urine and bile, respectively. Capable of transporting a wide range of purine and pyrimidine nucleobases, nucleosides and nucleotides, with cGMP, 2'deoxyguanosine and GMP being the preferred substrates. Functions as a pH- and chloride-independent cGMP bidirectional facilitative transporter that can regulate both intracellular and extracellular levels of cGMP and may be involved in cGMP signaling pathways. Mediates orotate/glutamate bidirectional exchange and most likely display a physiological role in hepatic release of glutamate into the blood. Involved in renal secretion and possible reabsorption of creatinine. Able to uptake prostaglandin E2 (PGE2) and may contribute to PGE2 renal excretion. Also transports alpha-ketoglutarate and urate. Apart from the orotate/glutamate exchange, the counterions for the uptake of other SLC22A7/OAT2 substrates remain to be identified. This chain is Solute carrier family 22 member 7 (SLC22A7), found in Pongo abelii (Sumatran orangutan).